Consider the following 305-residue polypeptide: Ribonuclease BN (305 aa).

Residues H64, H66, D68, H69, H141, D212, and H270 each coordinate Zn(2+). The active-site Proton acceptor is the D68.

Belongs to the RNase Z family. RNase BN subfamily. As to quaternary structure, homodimer. Zn(2+) is required as a cofactor.

Zinc phosphodiesterase, which has both exoribonuclease and endoribonuclease activities. This is Ribonuclease BN from Citrobacter koseri (strain ATCC BAA-895 / CDC 4225-83 / SGSC4696).